The chain runs to 289 residues: E3 ubiquitin-protein ligase MARCHF1 (289 aa).

Residues 1-66 are responsible for low stability; the sequence is MLGWCEAIAR…SPTTGTAPRS (66 aa). The interval 13–69 is disordered; that stretch reads HRIPNNTRTPEISGDLADASQTSTLNEKSPGRSASRSSNISKASSPTTGTAPRSQSR. Residues 43–58 are compositionally biased toward low complexity; sequence GRSASRSSNISKASSP. A compositionally biased stretch (polar residues) spans 59–69; the sequence is TTGTAPRSQSR. The RING-CH-type zinc-finger motif lies at 72–133; it reads VCPSTQDICR…ELCKYDFIME (62 aa). 8 residues coordinate Zn(2+): Cys-80, Cys-83, Cys-97, Cys-99, His-107, Cys-110, Cys-123, and Cys-126. Transmembrane regions (helical) follow at residues 155 to 175 and 197 to 217; these read IFCS…SLYV and FWTK…FMYV. Positions 222 to 279 are responsible for down-regulation of CD86 and MHC class II cell surface expression; it reads YVQLWRRLKAYNRVIFVQNCPDTAKKLEKNFSCNVNTDIKDAVVVPVPQTGANSLPSA.

In terms of assembly, interacts with CD83; this interaction antagonizes MARCHF1-mediated MHC II and CD86 down-regulation. In terms of processing, ubiquitinated via ubiquitin-conjugating enzyme E2 D1/UBE2D1 independently of lysines, leading to proteolytic degradation. Post-translationally, has a short half-life. Instability/short half-life permits rapid changes that allow efficient induction of antigen presentation once antigen presenting cells, APCs, receive maturation signals. Small changes in protein levels significantly alter the cell surface display of MHC class II proteins. In terms of tissue distribution, expressed in antigen presenting cells, APCs, located in lymph nodes and spleen. Also expressed in lung. Expression is high in follicular B-cells, moderate in dendritic cells and low in splenic T-cells.

The protein localises to the golgi apparatus. Its subcellular location is the trans-Golgi network membrane. It localises to the lysosome membrane. It is found in the cytoplasmic vesicle membrane. The protein resides in the late endosome membrane. The protein localises to the early endosome membrane. Its subcellular location is the cell membrane. The catalysed reaction is S-ubiquitinyl-[E2 ubiquitin-conjugating enzyme]-L-cysteine + [acceptor protein]-L-lysine = [E2 ubiquitin-conjugating enzyme]-L-cysteine + N(6)-ubiquitinyl-[acceptor protein]-L-lysine.. Its pathway is protein modification; protein ubiquitination. Functionally, E3 ubiquitin-protein ligase that mediates ubiquitination of TFRC, CD86, FAS and MHC class II proteins, such as HLA-DR alpha and beta, and promotes their subsequent endocytosis and sorting to lysosomes via multivesicular bodies. By constitutively ubiquitinating MHC class II proteins in immature dendritic cells, down-regulates their cell surface localization thus sequestering them in the intracellular endosomal system. Also regulates insulin sensitivity by controlling surface expression of the insulin receptor subunit beta/INSR by direct ubiquitination and degradation. Its function is as follows. (Microbial infection) Plays a role in iron metabolism by regulating the levels of the transferrin receptor TFRC during human cytomegalovirus infection, subsequently contributing to a proviral effect. The polypeptide is E3 ubiquitin-protein ligase MARCHF1 (Homo sapiens (Human)).